The following is a 612-amino-acid chain: Dihydroxy-acid dehydratase (612 aa).

Residue aspartate 81 coordinates Mg(2+). A [2Fe-2S] cluster-binding site is contributed by cysteine 122. Mg(2+)-binding residues include aspartate 123 and lysine 124. Lysine 124 is subject to N6-carboxylysine. Residue cysteine 195 coordinates [2Fe-2S] cluster. Residue glutamate 491 participates in Mg(2+) binding. Serine 517 acts as the Proton acceptor in catalysis.

Belongs to the IlvD/Edd family. Homodimer. Requires [2Fe-2S] cluster as cofactor. The cofactor is Mg(2+).

It catalyses the reaction (2R)-2,3-dihydroxy-3-methylbutanoate = 3-methyl-2-oxobutanoate + H2O. It carries out the reaction (2R,3R)-2,3-dihydroxy-3-methylpentanoate = (S)-3-methyl-2-oxopentanoate + H2O. Its pathway is amino-acid biosynthesis; L-isoleucine biosynthesis; L-isoleucine from 2-oxobutanoate: step 3/4. The protein operates within amino-acid biosynthesis; L-valine biosynthesis; L-valine from pyruvate: step 3/4. Its function is as follows. Functions in the biosynthesis of branched-chain amino acids. Catalyzes the dehydration of (2R,3R)-2,3-dihydroxy-3-methylpentanoate (2,3-dihydroxy-3-methylvalerate) into 2-oxo-3-methylpentanoate (2-oxo-3-methylvalerate) and of (2R)-2,3-dihydroxy-3-methylbutanoate (2,3-dihydroxyisovalerate) into 2-oxo-3-methylbutanoate (2-oxoisovalerate), the penultimate precursor to L-isoleucine and L-valine, respectively. This is Dihydroxy-acid dehydratase from Rhizobium meliloti (strain 1021) (Ensifer meliloti).